The primary structure comprises 1070 residues: DNA-directed RNA polymerase subunit beta (1070 aa).

The protein belongs to the RNA polymerase beta chain family. In terms of assembly, in plastids the minimal PEP RNA polymerase catalytic core is composed of four subunits: alpha, beta, beta', and beta''. When a (nuclear-encoded) sigma factor is associated with the core the holoenzyme is formed, which can initiate transcription.

It localises to the plastid. The protein resides in the chloroplast. It catalyses the reaction RNA(n) + a ribonucleoside 5'-triphosphate = RNA(n+1) + diphosphate. Functionally, DNA-dependent RNA polymerase catalyzes the transcription of DNA into RNA using the four ribonucleoside triphosphates as substrates. The chain is DNA-directed RNA polymerase subunit beta from Phalaenopsis aphrodite subsp. formosana (Moth orchid).